An 854-amino-acid polypeptide reads, in one-letter code: Protein translocase subunit SecA (854 aa).

Residues Q81, 99 to 103 (GEGKT), and D487 contribute to the ATP site.

The protein belongs to the SecA family. As to quaternary structure, monomer and homodimer. Part of the essential Sec protein translocation apparatus which comprises SecA, SecYEG and auxiliary proteins SecDF. Other proteins may also be involved.

The protein localises to the cell membrane. It localises to the cytoplasm. The enzyme catalyses ATP + H2O + cellular proteinSide 1 = ADP + phosphate + cellular proteinSide 2.. In terms of biological role, part of the Sec protein translocase complex. Interacts with the SecYEG preprotein conducting channel. Has a central role in coupling the hydrolysis of ATP to the transfer of proteins into and across the cell membrane, serving as an ATP-driven molecular motor driving the stepwise translocation of polypeptide chains across the membrane. In Mycoplasma mobile (strain ATCC 43663 / 163K / NCTC 11711) (Mesomycoplasma mobile), this protein is Protein translocase subunit SecA.